We begin with the raw amino-acid sequence, 423 residues long: uncharacterized protein (423 aa).

Residues 383–423 (ARGTTGGGGTRSGTSTDGQEDGRKPPVVVIREQPPPGNPPR) form a disordered region.

Belongs to the mycobacterial PPE family.

This is an uncharacterized protein from Mycobacterium tuberculosis (strain CDC 1551 / Oshkosh).